We begin with the raw amino-acid sequence, 236 residues long: 5'-methylthioadenosine/S-adenosylhomocysteine nucleosidase (236 aa).

Catalysis depends on E12, which acts as the Proton acceptor. Substrate-binding positions include G78, I153, and 174–175 (ME). Residue D198 is the Proton donor of the active site.

This sequence belongs to the PNP/UDP phosphorylase family. MtnN subfamily.

It catalyses the reaction S-adenosyl-L-homocysteine + H2O = S-(5-deoxy-D-ribos-5-yl)-L-homocysteine + adenine. The enzyme catalyses S-methyl-5'-thioadenosine + H2O = 5-(methylsulfanyl)-D-ribose + adenine. The catalysed reaction is 5'-deoxyadenosine + H2O = 5-deoxy-D-ribose + adenine. The protein operates within amino-acid biosynthesis; L-methionine biosynthesis via salvage pathway; S-methyl-5-thio-alpha-D-ribose 1-phosphate from S-methyl-5'-thioadenosine (hydrolase route): step 1/2. Its function is as follows. Catalyzes the irreversible cleavage of the glycosidic bond in both 5'-methylthioadenosine (MTA) and S-adenosylhomocysteine (SAH/AdoHcy) to adenine and the corresponding thioribose, 5'-methylthioribose and S-ribosylhomocysteine, respectively. Also cleaves 5'-deoxyadenosine, a toxic by-product of radical S-adenosylmethionine (SAM) enzymes, into 5-deoxyribose and adenine. The polypeptide is 5'-methylthioadenosine/S-adenosylhomocysteine nucleosidase (Shewanella baltica (strain OS223)).